The sequence spans 1382 residues: Suppressor of organelle fusion 2 (1382 aa).

One can recognise a BEACH domain in the interval 229–463 (RIPLDEATSN…QLFNRPHPIR (235 aa)). 2 WD repeats span residues 1094–1133 (GHQEKIRKLAAISNENSFVSASSDKTVKLWSIKPELDEIG) and 1140–1176 (KHTRPVHDITILADNSIASTDGVLHVWDPFRTTLLAQ).

This sequence belongs to the WD repeat WDR81 family. Interacts with sorf-1; the interaction is direct. Interacts with bec-1.

The protein localises to the early endosome. It localises to the late endosome. It is found in the cytoplasm. Together with sorf-1 negatively regulates the levels of phosphatidylinositol 3-phosphate (PtdIns3P) to enable the conversion of early endosomes to late endosomes. Binds to sorf-1 and the sorf-1-sorf-2 complex likely acts through bec-1, a non-catalytic subunit of phosphatidylinositol 3-kinase (PI3K), to suppress PI3K activity, thereby negatively regulating endosomal PtdIns3P levels. This chain is Suppressor of organelle fusion 2, found in Caenorhabditis elegans.